Here is a 205-residue protein sequence, read N- to C-terminus: N-(5'-phosphoribosyl)anthranilate isomerase (205 aa).

Belongs to the TrpF family.

The catalysed reaction is N-(5-phospho-beta-D-ribosyl)anthranilate = 1-(2-carboxyphenylamino)-1-deoxy-D-ribulose 5-phosphate. Its pathway is amino-acid biosynthesis; L-tryptophan biosynthesis; L-tryptophan from chorismate: step 3/5. In Trichlorobacter lovleyi (strain ATCC BAA-1151 / DSM 17278 / SZ) (Geobacter lovleyi), this protein is N-(5'-phosphoribosyl)anthranilate isomerase.